The following is a 389-amino-acid chain: Succinate--CoA ligase [ADP-forming] subunit beta (389 aa).

The 228-residue stretch at 9–236 (KELFAKHEVP…KDATDPLELK (228 aa)) folds into the ATP-grasp domain. ATP-binding positions include Lys45, 52–54 (GRG), Ser94, and Glu99. Mg(2+) is bound by residues Asn191 and Asp205. Substrate contacts are provided by residues Asn256 and 318–320 (GIT).

Belongs to the succinate/malate CoA ligase beta subunit family. Heterotetramer of two alpha and two beta subunits. The cofactor is Mg(2+).

The catalysed reaction is succinate + ATP + CoA = succinyl-CoA + ADP + phosphate. It carries out the reaction GTP + succinate + CoA = succinyl-CoA + GDP + phosphate. It participates in carbohydrate metabolism; tricarboxylic acid cycle; succinate from succinyl-CoA (ligase route): step 1/1. Its function is as follows. Succinyl-CoA synthetase functions in the citric acid cycle (TCA), coupling the hydrolysis of succinyl-CoA to the synthesis of either ATP or GTP and thus represents the only step of substrate-level phosphorylation in the TCA. The beta subunit provides nucleotide specificity of the enzyme and binds the substrate succinate, while the binding sites for coenzyme A and phosphate are found in the alpha subunit. The sequence is that of Succinate--CoA ligase [ADP-forming] subunit beta from Rhodococcus jostii (strain RHA1).